The following is a 475-amino-acid chain: Bifunctional protein HldE (475 aa).

The ribokinase stretch occupies residues Met1–His321. Asn197–Glu200 contacts ATP. Asp266 is a catalytic residue. The cytidylyltransferase stretch occupies residues Met346–Asn475.

The protein in the N-terminal section; belongs to the carbohydrate kinase PfkB family. It in the C-terminal section; belongs to the cytidylyltransferase family. As to quaternary structure, homodimer.

It carries out the reaction D-glycero-beta-D-manno-heptose 7-phosphate + ATP = D-glycero-beta-D-manno-heptose 1,7-bisphosphate + ADP + H(+). The enzyme catalyses D-glycero-beta-D-manno-heptose 1-phosphate + ATP + H(+) = ADP-D-glycero-beta-D-manno-heptose + diphosphate. Its pathway is nucleotide-sugar biosynthesis; ADP-L-glycero-beta-D-manno-heptose biosynthesis; ADP-L-glycero-beta-D-manno-heptose from D-glycero-beta-D-manno-heptose 7-phosphate: step 1/4. The protein operates within nucleotide-sugar biosynthesis; ADP-L-glycero-beta-D-manno-heptose biosynthesis; ADP-L-glycero-beta-D-manno-heptose from D-glycero-beta-D-manno-heptose 7-phosphate: step 3/4. Functionally, catalyzes the phosphorylation of D-glycero-D-manno-heptose 7-phosphate at the C-1 position to selectively form D-glycero-beta-D-manno-heptose-1,7-bisphosphate. In terms of biological role, catalyzes the ADP transfer from ATP to D-glycero-beta-D-manno-heptose 1-phosphate, yielding ADP-D-glycero-beta-D-manno-heptose. The protein is Bifunctional protein HldE of Coxiella burnetii (strain RSA 331 / Henzerling II).